Consider the following 658-residue polypeptide: MTQLAIGEATPHGATYDGHGVNFTLFSAHAERVELCVFDSRGNERRYDLPGRRGDVWHGYLAGARPGLRYGYRVHGPWQPVQGHRFNPAKLLLDPYARRVEGELKDHPLLHGGHDEPDYRDNAAVAPKSVVISDHYDWEDDAAPRTPWGKTVIYEAHVKGLTYLHPELPQEIRGTYKALGHPVMVAYFKQLGITALELLPVAQFASEPRLQRMGLTNYWGYNPMAMFALHPAWASSPEMALDEFRDAVKALHRAGIEVILDIVLNHSAELDLDGPTFSLRGIDNRSYYWIRDDGDYHNWTGCGNTLNLSHPGVVEYACECLRYWVETCHVDGFRFDLASVMGRTPTFRQDAPLFAAIKACPVLSTVKLIAEPWDIGEGGYQVGNFPPPFAEWNDHFRDAARRFWLPRNLTTGEFACRFAASSDVFKRNGRAPGASVNLLTAHDGFTLRDCVCFNQKHNEANGEENRDGTNSNYSDNNGKEGLGGPLDLMERRRDSIHALLATLLLSQGTPMLLAGDEHGHSQHGNNNAYCQDNALTWLDWQQANRGLTTFTAALIRLRQQIPALTGNSWWEEGDGNVRWLNKNAQPLSADEWQNGPKLMQILLSDRFLIAINATLEVTDIVLPEGEWRAVPPFAGEDNPVITAVWQGPAHGLCVFQRG.

D336 serves as the catalytic Nucleophile. Residue E371 is the Proton donor of the active site. Residues 459 to 486 (EANGEENRDGTNSNYSDNNGKEGLGGPL) are disordered.

This sequence belongs to the glycosyl hydrolase 13 family.

It carries out the reaction Hydrolysis of (1-&gt;6)-alpha-D-glucosidic linkages to branches with degrees of polymerization of three or four glucose residues in limit dextrin.. Its pathway is glycan degradation; glycogen degradation. Removes maltotriose and maltotetraose chains that are attached by 1,6-alpha-linkage to the limit dextrin main chain, generating a debranched limit dextrin. This chain is Glycogen debranching enzyme, found in Salmonella gallinarum (strain 287/91 / NCTC 13346).